A 20-amino-acid chain; its full sequence is Collagenolytic protease 36 kDa C (20 aa).

Positions 1–20 (IVGGSEATSGQFPYQXSFQD) constitute a Peptidase S1 domain. Positions 1 to 20 (IVGGSEATSGQFPYQXSFQD) are disordered.

It belongs to the peptidase S1 family.

It catalyses the reaction Hydrolysis of proteins, with broad specificity for peptide bonds. Native collagen is cleaved about 75% of the length of the molecule from the N-terminus. Low activity on small molecule substrates of both trypsin and chymotrypsin.. Functionally, this enzyme is a serine protease capable of degrading the native triple helix of collagen. This Paralithodes camtschaticus (Red king crab) protein is Collagenolytic protease 36 kDa C.